Consider the following 478-residue polypeptide: Putative sulfate transporter YbaR (478 aa).

The next 12 helical transmembrane spans lie at 19-39 (ILAG…FSII), 42-62 (VDPM…SIFG), 65-85 (PGMI…LVAD), 87-107 (GLQY…ILGI), 121-141 (VMIG…LPQF), 143-163 (GASW…YVLP), 168-188 (AVPS…TFHV), 220-240 (IIFP…LLTA), 259-279 (GQGI…CAMI), 295-315 (SAFV…HVVV), 345-365 (APLT…VTDD), and 366-386 (LSKG…AKIS). Residues 389 to 478 (KIVSHAEDQK…ASKSLMKQMA (90 aa)) form the STAS domain.

The protein belongs to the SLC26A/SulP transporter (TC 2.A.53) family.

The protein resides in the cell membrane. The chain is Putative sulfate transporter YbaR (ybaR) from Bacillus subtilis (strain 168).